Consider the following 313-residue polypeptide: Probable cell division protein WhiA (313 aa).

The segment at residues 280-313 (SLKELGAMLNPPIGKSGVNHRLKKLCSIADGLRQ) is a DNA-binding region (H-T-H motif).

The protein belongs to the WhiA family.

Its function is as follows. Involved in cell division and chromosome segregation. In Lachnoclostridium phytofermentans (strain ATCC 700394 / DSM 18823 / ISDg) (Clostridium phytofermentans), this protein is Probable cell division protein WhiA.